The following is a 116-amino-acid chain: Ig heavy chain V region 3-6 (116 aa).

Positions 1-18 (MKVLSLLYLLTAIPGILS) are cleaved as a signal peptide. The interval 19 to 48 (DVQLQESGPGLVKPSQSLSLTCSVTGYSIT) is framework-1. A disulfide bridge connects residues cysteine 40 and cysteine 114. A complementarity-determining-1 region spans residues 49–53 (SGYYW). The interval 54–67 (NWIRQFPGNKLEWM) is framework-2. Residues 68-84 (GYISYDGSNNYNPSLKN) are complementarity-determining-2. The framework-3 stretch occupies residues 85 to 116 (RISITRDTSKNQFFLKLNSVTTEDTATYYCAR).

This Mus musculus (Mouse) protein is Ig heavy chain V region 3-6 (Ighv3-6).